We begin with the raw amino-acid sequence, 480 residues long: MEWETVIGLEVHVQLATKTKIFSGASTAFGAEPNTQACAIDLAMPGTLPSPNAKAFEYAIMFGLAVNAEIGKRSVFERKNYFYPDSPKGYQTTQLEQPIVGAGYIDIELDDGSTKRIRIHHAHLEEDAGKSLHEDFHDMTGIDLNRAGTPLIEVVTEPDISNKAEAVAFARKLHAIVTSLGIGDGDMSQGSMRFDVNISVRLKGQELGTRTETKNLNSFRFMERCIDQEVQRQIEVLEDGGKITQETRLYNGDTHTARPMRSKEEANDYRYFPCPDLLPVEITDEYIQSLRDKLPELPDARKARFIEQYGLSDYDAGLLGSDANTAHYFEVCAKACDDAKLSANWVAGELAARLNNEELAIQNSPVNAEQLAGLIARIKDQTISNKIAKQVFEAMWQGEGDADTVIEAKGLKQVSDSGALEKMVDDVMAANQQQVDAYRAAEPDKRKKMLGFFVGQIMKASKGQANPQQLNQILLSKLDS.

The protein belongs to the GatB/GatE family. GatB subfamily. In terms of assembly, heterotrimer of A, B and C subunits.

It catalyses the reaction L-glutamyl-tRNA(Gln) + L-glutamine + ATP + H2O = L-glutaminyl-tRNA(Gln) + L-glutamate + ADP + phosphate + H(+). It carries out the reaction L-aspartyl-tRNA(Asn) + L-glutamine + ATP + H2O = L-asparaginyl-tRNA(Asn) + L-glutamate + ADP + phosphate + 2 H(+). Its function is as follows. Allows the formation of correctly charged Asn-tRNA(Asn) or Gln-tRNA(Gln) through the transamidation of misacylated Asp-tRNA(Asn) or Glu-tRNA(Gln) in organisms which lack either or both of asparaginyl-tRNA or glutaminyl-tRNA synthetases. The reaction takes place in the presence of glutamine and ATP through an activated phospho-Asp-tRNA(Asn) or phospho-Glu-tRNA(Gln). The chain is Aspartyl/glutamyl-tRNA(Asn/Gln) amidotransferase subunit B from Saccharophagus degradans (strain 2-40 / ATCC 43961 / DSM 17024).